The sequence spans 168 residues: MMKLKSNQTRTYDGDGYKKRAACLCFRSESEEEVLLVSSSRHPDRWIVPGGGMEPEEEPSVAAVREVCEEAGVKGTLGRLVGIFENQERKHRTYVYVLIVTEVLEDWEDSVNIGRKREWFKIEDAIKVLQCHKPVQASYFETLRQGYPANNGTPVVPTTYSSSVSGIR.

Met1 bears the N-acetylmethionine mark. Substrate-binding positions include Arg10, 18–20, and 39–41; these read KKR and SSR. The 128-residue stretch at 17–144 folds into the Nudix hydrolase domain; it reads YKKRAACLCF…VQASYFETLR (128 aa). Mg(2+) contacts are provided by Gly50 and Glu66. The Nudix box motif lies at 51 to 72; it reads GGMEPEEEPSVAAVREVCEEAG. Glu69 (proton acceptor) is an active-site residue. Glu70 contributes to the Mg(2+) binding site. Substrate contacts are provided by residues 89–91, Arg115, and Lys133; that span reads RKH.

This sequence belongs to the Nudix hydrolase family. DIPP subfamily. In terms of assembly, monomer. It depends on Mg(2+) as a cofactor. The cofactor is Mn(2+). Zn(2+) is required as a cofactor. In terms of tissue distribution, present in heart, lung, liver and spleen (at protein level). Widely expressed.

It is found in the cytoplasm. The protein resides in the nucleus. The catalysed reaction is diphospho-myo-inositol polyphosphate + H2O = myo-inositol polyphosphate + phosphate.. It carries out the reaction 5-diphospho-1D-myo-inositol 1,2,3,4,6-pentakisphosphate + H2O = 1D-myo-inositol hexakisphosphate + phosphate + H(+). The enzyme catalyses 3,5-bis(diphospho)-1D-myo-inositol 1,2,4,6-tetrakisphosphate + H2O = 3-diphospho-1D-myo-inositol 1,2,4,5,6-pentakisphosphate + phosphate + 2 H(+). It catalyses the reaction [phosphate](n+1) + n H2O = (n+1) phosphate + n H(+). The catalysed reaction is P(1),P(5)-bis(5'-adenosyl) pentaphosphate + H2O = ADP + ATP + 2 H(+). It carries out the reaction P(1),P(6)-bis(5'-adenosyl) hexaphosphate + H2O = 2 ATP + 2 H(+). The enzyme catalyses P(1),P(4)-bis(5'-adenosyl) tetraphosphate + H2O = AMP + ATP + 2 H(+). It catalyses the reaction a 5'-end (N(7)-methyl 5'-triphosphoguanosine)-ribonucleoside in mRNA + H2O = N(7)-methyl-GMP + a 5'-end diphospho-ribonucleoside in mRNA + 2 H(+). The catalysed reaction is a 5'-end (N(7)-methyl 5'-triphosphoguanosine)-ribonucleoside in mRNA + H2O = N(7)-methyl-GDP + a 5'-end phospho-ribonucleoside in mRNA + 2 H(+). In terms of biological role, cleaves a beta-phosphate from the diphosphate groups in PP-InsP5 (diphosphoinositol pentakisphosphate) and [PP]2-InsP4 (bisdiphosphoinositol tetrakisphosphate), suggesting that it may play a role in signal transduction. InsP6 (inositol hexakisphosphate) is not a substrate. Also able to catalyze the hydrolysis of dinucleoside oligophosphates, with diadenosine 5',5'''-P1,P6-hexaphosphate (Ap6A) and diadenosine 5',5'''- P1,P5-pentaphosphate (Ap5A) being the preferred substrates. The major reaction products are ADP and p4a from Ap6A and ADP and ATP from Ap5A. Also able to hydrolyze 5- phosphoribose 1-diphosphate. Acts as a negative regulator of the ERK1/2 pathway. Acts as a decapping enzyme that can hydrolyze both monomethylated and unmethylated capped RNAs. Hydrolyzes monomethylated capped RNA after both the alpha- and beta-phosphates generating m7GMP + ppRNA and m7GDP + pRNA. Modulates the stability of a subset of mRNAs implicated in cell motility. Divalent cations zinc, magnesium and manganese determine its substrate specificity. Exhibits diphosphoinositol polyphosphate phosphohydrolase in the presence of magnesium ions, diadenosine hexaphosphate hydrolase activity in the presence of manganese ions and endopolyphosphatase activity in the presence of zinc ions. Plays an important role in limiting DNA damage and maintaining cell survival upon oxidative stress via its endopolyphosphatase activity. The chain is Diphosphoinositol polyphosphate phosphohydrolase 1 from Mus musculus (Mouse).